Reading from the N-terminus, the 352-residue chain is MGHCTSKDQKEGKRLNRRIDEQIKKDQSMSLRIIKLLLLGAGESGKSTILKQMRILHKDGFSQQDLEMIRPVVYSNCIHSMLSILRAMFHLQIEYGEPDRVRDSQLVFATVHANKEELTEELAQAMQRLWHDPGVRECYRRSNEYQIDDSAKYFLDNLPRLSSPSYVPSEQDLLRTRIKTTGITEVLFELKGLTFRVIDVGGQRSERKKWIHCFDNVNAIIFISSLSEYDQTLREDNCTNRMQESLKLFDSICNSPWFADIHFILFLNKKDLFAEKIVRSPLTVCFPEYKGQQNQTECINYIQWKFEQLNRSSQREIYCHHTCATDTNNVQFVLDACLDMIIAKNLKSMGLC.

Gly2 carries N-myristoyl glycine lipidation. Cys4 carries the S-palmitoyl cysteine lipid modification. The G-alpha domain maps to 32 to 352; it reads RIIKLLLLGA…AKNLKSMGLC (321 aa). Positions 35–48 are G1 motif; the sequence is KLLLLGAGESGKST. GTP contacts are provided by residues 40–47, 174–180, 199–203, 268–271, and Ala324; these read GAGESGKS, LRTRIKT, DVGGQ, and NKKD. 2 residues coordinate Mg(2+): Ser47 and Thr180. The G2 motif stretch occupies residues 172–180; it reads DLLRTRIKT. Positions 195–204 are G3 motif; that stretch reads FRVIDVGGQR. Residues 264 to 271 form a G4 motif region; sequence ILFLNKKD. The interval 322–327 is G5 motif; the sequence is TCATDT.

It belongs to the G-alpha family. G(i/o/t/z) subfamily. G proteins are composed of 3 units; alpha, beta and gamma. The alpha chain contains the guanine nucleotide binding site.

In terms of biological role, guanine nucleotide-binding proteins (G proteins) are involved as modulators or transducers in various transmembrane signaling systems. The protein is Guanine nucleotide-binding protein alpha-7 subunit (gpa-7) of Caenorhabditis briggsae.